Consider the following 218-residue polypeptide: NAD(P)H-quinone oxidoreductase subunit I (218 aa).

2 4Fe-4S ferredoxin-type domains span residues Gly55–Val84 and Arg95–Glu124. [4Fe-4S] cluster-binding residues include Cys64, Cys67, Cys70, Cys74, Cys104, Cys107, Cys110, and Cys114. The interval Met169 to Lys218 is disordered. A compositionally biased stretch (basic and acidic residues) spans Leu192–Gly201. Over residues Asn202–Lys218 the composition is skewed to polar residues.

Belongs to the complex I 23 kDa subunit family. As to quaternary structure, NDH-1 is composed of at least 11 different subunits. The cofactor is [4Fe-4S] cluster.

The protein localises to the cellular thylakoid membrane. It carries out the reaction a plastoquinone + NADH + (n+1) H(+)(in) = a plastoquinol + NAD(+) + n H(+)(out). The catalysed reaction is a plastoquinone + NADPH + (n+1) H(+)(in) = a plastoquinol + NADP(+) + n H(+)(out). NDH-1 shuttles electrons from an unknown electron donor, via FMN and iron-sulfur (Fe-S) centers, to quinones in the respiratory and/or the photosynthetic chain. The immediate electron acceptor for the enzyme in this species is believed to be plastoquinone. Couples the redox reaction to proton translocation, and thus conserves the redox energy in a proton gradient. The chain is NAD(P)H-quinone oxidoreductase subunit I from Prochlorococcus marinus (strain NATL1A).